Reading from the N-terminus, the 60-residue chain is Large ribosomal subunit protein uL30 (60 aa).

This sequence belongs to the universal ribosomal protein uL30 family. Part of the 50S ribosomal subunit.

The protein is Large ribosomal subunit protein uL30 of Paracidovorax citrulli (strain AAC00-1) (Acidovorax citrulli).